Reading from the N-terminus, the 609-residue chain is Glutamine--fructose-6-phosphate aminotransferase [isomerizing] (609 aa).

Catalysis depends on Cys2, which acts as the Nucleophile; for GATase activity. In terms of domain architecture, Glutamine amidotransferase type-2 spans 2-218 (CGIVGAIAQR…EGDIAEITRR (217 aa)). 2 SIS domains span residues 286–426 (ADEL…LKGL) and 458–599 (LAED…VDQP). Residue Lys604 is the For Fru-6P isomerization activity of the active site.

As to quaternary structure, homodimer.

The protein resides in the cytoplasm. The enzyme catalyses D-fructose 6-phosphate + L-glutamine = D-glucosamine 6-phosphate + L-glutamate. Its function is as follows. Catalyzes the first step in hexosamine metabolism, converting fructose-6P into glucosamine-6P using glutamine as a nitrogen source. The sequence is that of Glutamine--fructose-6-phosphate aminotransferase [isomerizing] from Salmonella paratyphi A (strain ATCC 9150 / SARB42).